A 130-amino-acid chain; its full sequence is DNA-directed RNA polymerase subunit omega (130 aa).

Disordered regions lie at residues 79 to 98 (EPESDTVPLIGSAGASVDAD) and 108 to 130 (TEEELLKGLEGLAPPEEQPEEDE).

Belongs to the RNA polymerase subunit omega family. In terms of assembly, the RNAP catalytic core consists of 2 alpha, 1 beta, 1 beta' and 1 omega subunit. When a sigma factor is associated with the core the holoenzyme is formed, which can initiate transcription.

The enzyme catalyses RNA(n) + a ribonucleoside 5'-triphosphate = RNA(n+1) + diphosphate. Functionally, promotes RNA polymerase assembly. Latches the N- and C-terminal regions of the beta' subunit thereby facilitating its interaction with the beta and alpha subunits. The protein is DNA-directed RNA polymerase subunit omega of Nitrobacter winogradskyi (strain ATCC 25391 / DSM 10237 / CIP 104748 / NCIMB 11846 / Nb-255).